Reading from the N-terminus, the 314-residue chain is Olfactory receptor 1E2 (314 aa).

The Extracellular portion of the chain corresponds to M1–N25. Residue N5 is glycosylated (N-linked (GlcNAc...) asparagine). Residues L26–I49 traverse the membrane as a helical segment. Topologically, residues R50–T57 are cytoplasmic. A helical transmembrane segment spans residues P58–P79. At K80 to Q100 the chain is on the extracellular side. A disulfide bond links C97 and C189. A helical transmembrane segment spans residues M101 to Y120. Over D121–M139 the chain is Cytoplasmic. A helical transmembrane segment spans residues L140–L158. The Extracellular portion of the chain corresponds to H159 to E196. A helical membrane pass occupies residues W197 to A219. Residues R220–K236 are Cytoplasmic-facing. A helical transmembrane segment spans residues A237 to L260. Topologically, residues C261–T272 are extracellular. Residue N265 is glycosylated (N-linked (GlcNAc...) asparagine). A helical membrane pass occupies residues V273–L292. Residues R293–L314 are Cytoplasmic-facing.

Belongs to the G-protein coupled receptor 1 family.

The protein resides in the cell membrane. Odorant receptor. The sequence is that of Olfactory receptor 1E2 (OR1E2) from Pan troglodytes (Chimpanzee).